Consider the following 326-residue polypeptide: Serpentine receptor class alpha-12 (326 aa).

Over 1 to 17 (MSCASEVQAQLFTHPVQ) the chain is Extracellular. A helical transmembrane segment spans residues 18–38 (IIYACVQTVLFLATIIGSLLA). Residues 39–54 (IVQLCKKTTIPDSTKV) are Cytoplasmic-facing. Residues 55–75 (LLIGALFFANAHELAYFSSPF) traverse the membrane as a helical segment. The Extracellular portion of the chain corresponds to 76–101 (KVFKMNLFHTNTSCYPLASTLECIPT). The helical transmembrane segment at 102–122 (TTVLAMGISGNMLIQSALSIF) threads the bilayer. Residues 123-138 (RLLATIFPVCYSRMRA) lie on the Cytoplasmic side of the membrane. A helical transmembrane segment spans residues 139–159 (LPGVVLLFMVLIPSFLSYSWI). Topologically, residues 160-185 (RSDIVLDDYQMFCSQWSANISSRANT) are extracellular. The helical transmembrane segment at 186–206 (YLEYCSYLTVAHIIINALIIL) threads the bilayer. The Cytoplasmic segment spans residues 207–234 (RNRSVESKCRFDVQQRYLNSETLKTTQT). A helical membrane pass occupies residues 235-255 (ICYLSIAQFLAMFLYSGGVLF). Over 256–270 (MRKNQKNIPTLIYIN) the chain is Extracellular. Residues 271–291 (VIVWVYAPPYACVSLAPLILF) traverse the membrane as a helical segment. At 292–326 (SLWNLKKQRQIRIQSITVQKETQEDHIRKLQLSWG) the chain is on the cytoplasmic side.

The protein belongs to the nematode receptor-like protein sra family.

It is found in the membrane. This chain is Serpentine receptor class alpha-12, found in Caenorhabditis briggsae.